A 501-amino-acid chain; its full sequence is Sarpagan bridge enzyme (501 aa).

Residues 3-23 (VMQLSFSYPALFLFVFFLFML) traverse the membrane as a helical; Signal-anchor for type II membrane protein segment. Residue C441 coordinates heme.

The protein belongs to the cytochrome P450 family. It depends on heme as a cofactor. In terms of tissue distribution, highly expressed in roots. Expressed at low levels in stems.

It localises to the endoplasmic reticulum membrane. It carries out the reaction (19E)-geissoschizine + reduced [NADPH--hemoprotein reductase] + O2 = polyneuridine aldehyde + oxidized [NADPH--hemoprotein reductase] + 2 H2O + H(+). The enzyme catalyses tetrahydroalstonine + A + reduced [NADPH--hemoprotein reductase] + O2 = alstonine + AH2 + oxidized [NADPH--hemoprotein reductase] + 2 H2O + H(+). It catalyses the reaction ajmalicine + A + reduced [NADPH--hemoprotein reductase] + O2 = serpentine + AH2 + oxidized [NADPH--hemoprotein reductase] + 2 H2O + H(+). It functions in the pathway alkaloid biosynthesis; ajmaline biosynthesis. Its function is as follows. Monooxygenase involved in the biosynthesis of ajmaline-type monoterpenoid indole alkaloids (MIAs) natural products, important plant-derived pharmaceuticals used in the therapy of heart disorders. Converts by cyclization the strictosidine-derived geissoschizine to the sarpagan alkaloid polyneuridine aldehyde, precursor of vomilenine, an intermediate chemical in the biosynthesis of ajmaline. Converts by aromatization the tetrahydro-beta-carboline alkaloids tetrahydroalstonine and ajmalicine to the corresponding beta-carboline alkaloids alstonine and serpentine, respectively. This is Sarpagan bridge enzyme from Gelsemium sempervirens (Carolina jasmine).